Reading from the N-terminus, the 627-residue chain is Polyadenylate-binding protein, cytoplasmic and nuclear (627 aa).

Residues 1–11 (MSAADANQVQE) are compositionally biased toward polar residues. The tract at residues 1–46 (MSAADANQVQESLEKLNLDSAPVASTEETEQTASGETEEAADSAQV) is disordered. RRM domains are found at residues 51 to 129 (ASLY…WSQR), 139 to 216 (GNIF…KHIS), 232 to 309 (TNVY…RAQK), and 335 to 412 (VNLF…LAQR). Positions 511–535 (DFNNGANGGRQQRGYYPNRNQNQKG) are enriched in low complexity. Residues 511 to 537 (DFNNGANGGRQQRGYYPNRNQNQKGRQ) are disordered. The PABC domain maps to 537 to 618 (QQKDLAAIIA…ALTAFEEYKK (82 aa)).

The protein belongs to the polyadenylate-binding protein type-1 family.

The protein resides in the cytoplasm. It localises to the nucleus. In terms of biological role, binds the poly(A) tail of mRNA. Appears to be an important mediator of the multiple roles of the poly(A) tail in mRNA biogenesis, stability and translation. In the nucleus, involved in both mRNA cleavage and polyadenylation. Is also required for efficient mRNA export to the cytoplasm. Acts in concert with a poly(A)-specific nuclease (PAN) to affect poly(A) tail shortening, which may occur concomitantly with either nucleocytoplasmic mRNA transport or translational initiation. In the cytoplasm, stimulates translation initiation and regulates mRNA decay through translation termination-coupled poly(A) shortening, probably mediated by PAN. This Debaryomyces hansenii (strain ATCC 36239 / CBS 767 / BCRC 21394 / JCM 1990 / NBRC 0083 / IGC 2968) (Yeast) protein is Polyadenylate-binding protein, cytoplasmic and nuclear (PAB1).